The primary structure comprises 246 residues: Probable phosphatase Ssed_2939 (246 aa).

Zn(2+) contacts are provided by His-8, His-10, His-16, His-41, Glu-74, His-102, His-132, Asp-193, and His-195.

This sequence belongs to the PHP family. The cofactor is Zn(2+).

This Shewanella sediminis (strain HAW-EB3) protein is Probable phosphatase Ssed_2939.